The following is a 513-amino-acid chain: ATP synthase subunit alpha 2 (513 aa).

169–176 (GDRQVGKT) contacts ATP.

It belongs to the ATPase alpha/beta chains family. F-type ATPases have 2 components, CF(1) - the catalytic core - and CF(0) - the membrane proton channel. CF(1) has five subunits: alpha(3), beta(3), gamma(1), delta(1), epsilon(1). CF(0) has three main subunits: a(1), b(2) and c(9-12). The alpha and beta chains form an alternating ring which encloses part of the gamma chain. CF(1) is attached to CF(0) by a central stalk formed by the gamma and epsilon chains, while a peripheral stalk is formed by the delta and b chains.

The protein localises to the cell inner membrane. The enzyme catalyses ATP + H2O + 4 H(+)(in) = ADP + phosphate + 5 H(+)(out). Its function is as follows. Produces ATP from ADP in the presence of a proton gradient across the membrane. The alpha chain is a regulatory subunit. This chain is ATP synthase subunit alpha 2, found in Psychromonas ingrahamii (strain DSM 17664 / CCUG 51855 / 37).